Reading from the N-terminus, the 505-residue chain is ATP synthase subunit alpha (505 aa).

170 to 177 (GDRQTGKT) provides a ligand contact to ATP.

Belongs to the ATPase alpha/beta chains family. In terms of assembly, F-type ATPases have 2 components, CF(1) - the catalytic core - and CF(0) - the membrane proton channel. CF(1) has five subunits: alpha(3), beta(3), gamma(1), delta(1), epsilon(1). CF(0) has four main subunits: a(1), b(1), b'(1) and c(9-12).

The protein resides in the cellular thylakoid membrane. The enzyme catalyses ATP + H2O + 4 H(+)(in) = ADP + phosphate + 5 H(+)(out). Its function is as follows. Produces ATP from ADP in the presence of a proton gradient across the membrane. The alpha chain is a regulatory subunit. The chain is ATP synthase subunit alpha from Synechococcus elongatus (strain ATCC 33912 / PCC 7942 / FACHB-805) (Anacystis nidulans R2).